Consider the following 142-residue polypeptide: Hemoglobin subunit alpha (142 aa).

Positions 2–142 constitute a Globin domain; that stretch reads VLSAADKGNV…VSTVLTSKYR (141 aa). The residue at position 4 (serine 4) is a Phosphoserine. 2 positions are modified to N6-succinyllysine: lysine 8 and lysine 12. An N6-acetyllysine; alternate modification is found at lysine 17. Lysine 17 carries the N6-succinyllysine; alternate modification. Position 25 is a phosphotyrosine (tyrosine 25). Residue serine 36 is modified to Phosphoserine. At lysine 41 the chain carries N6-succinyllysine. Serine 50 carries the post-translational modification Phosphoserine. Histidine 59 serves as a coordination point for O2. Histidine 88 is a binding site for heme b. Serine 103 carries the phosphoserine modification. Threonine 109 is modified (phosphothreonine). Serine 125 is subject to Phosphoserine. Phosphothreonine is present on residues threonine 135 and threonine 138. Serine 139 is modified (phosphoserine).

It belongs to the globin family. Heterotetramer of two alpha chains and two beta chains. As to expression, red blood cells.

Its function is as follows. Involved in oxygen transport from the lung to the various peripheral tissues. Functionally, hemopressin acts as an antagonist peptide of the cannabinoid receptor CNR1. Hemopressin-binding efficiently blocks cannabinoid receptor CNR1 and subsequent signaling. This chain is Hemoglobin subunit alpha (HBA), found in Bos gaurus frontalis (Domestic gayal).